The primary structure comprises 241 residues: FKBP-type peptidyl-prolyl cis-trans isomerase FkpA (241 aa).

Positions 153–241 (ETKITVHYKG…IELLDVVNGV (89 aa)) constitute a PPIase FKBP-type domain.

The protein belongs to the FKBP-type PPIase family.

The enzyme catalyses [protein]-peptidylproline (omega=180) = [protein]-peptidylproline (omega=0). Its function is as follows. PPIases accelerate the folding of proteins. It catalyzes the cis-trans isomerization of proline imidic peptide bonds in oligopeptides. This is FKBP-type peptidyl-prolyl cis-trans isomerase FkpA (fkpA) from Buchnera aphidicola subsp. Acyrthosiphon pisum (strain APS) (Acyrthosiphon pisum symbiotic bacterium).